We begin with the raw amino-acid sequence, 302 residues long: Sulfate adenylyltransferase subunit 2 (302 aa).

The disordered stretch occupies residues 280–302 (RQGRLIDSDQSASMEQKKRQGYF).

Belongs to the PAPS reductase family. CysD subfamily. In terms of assembly, heterodimer composed of CysD, the smaller subunit, and CysN.

It carries out the reaction sulfate + ATP + H(+) = adenosine 5'-phosphosulfate + diphosphate. Its pathway is sulfur metabolism; hydrogen sulfide biosynthesis; sulfite from sulfate: step 1/3. With CysN forms the ATP sulfurylase (ATPS) that catalyzes the adenylation of sulfate producing adenosine 5'-phosphosulfate (APS) and diphosphate, the first enzymatic step in sulfur assimilation pathway. APS synthesis involves the formation of a high-energy phosphoric-sulfuric acid anhydride bond driven by GTP hydrolysis by CysN coupled to ATP hydrolysis by CysD. The sequence is that of Sulfate adenylyltransferase subunit 2 from Shewanella putrefaciens (strain CN-32 / ATCC BAA-453).